Here is a 211-residue protein sequence, read N- to C-terminus: MHRRSSKSYSSRNSKTPERSKIPDCVIASNKSAEYNYFLDKTFEAGLVLLGSEVKSVRQQKISLSEAYIYEDNSEIWLANLYIPEHKTGGWTNHNPRRLRKLLLHKYQIARLRKDLLIPGITLVPIKFYFRNGRAKLLISLARGKKLIDKREVIKEREATLEANRALKHRLRRPRAQRNTQRSVTPRSTRENKNVQRNKARSARCNVRHEN.

2 disordered regions span residues 1 to 20 (MHRRSSKSYSSRNSKTPERS) and 170 to 211 (RLRR…RHEN). The span at 177 to 187 (QRNTQRSVTPR) shows a compositional bias: polar residues.

This sequence belongs to the SmpB family.

Its subcellular location is the cytoplasm. Functionally, required for rescue of stalled ribosomes mediated by trans-translation. Binds to transfer-messenger RNA (tmRNA), required for stable association of tmRNA with ribosomes. tmRNA and SmpB together mimic tRNA shape, replacing the anticodon stem-loop with SmpB. tmRNA is encoded by the ssrA gene; the 2 termini fold to resemble tRNA(Ala) and it encodes a 'tag peptide', a short internal open reading frame. During trans-translation Ala-aminoacylated tmRNA acts like a tRNA, entering the A-site of stalled ribosomes, displacing the stalled mRNA. The ribosome then switches to translate the ORF on the tmRNA; the nascent peptide is terminated with the 'tag peptide' encoded by the tmRNA and targeted for degradation. The ribosome is freed to recommence translation, which seems to be the essential function of trans-translation. The sequence is that of SsrA-binding protein from Tropheryma whipplei (strain TW08/27) (Whipple's bacillus).